A 45-amino-acid polypeptide reads, in one-letter code: DNA-directed RNA polymerase subunit Rpo12 (45 aa).

Zn(2+)-binding residues include cysteine 8, cysteine 23, and cysteine 26.

Belongs to the archaeal Rpo12/eukaryotic RPC10 RNA polymerase subunit family. Part of the RNA polymerase complex. Zn(2+) is required as a cofactor.

It localises to the cytoplasm. It carries out the reaction RNA(n) + a ribonucleoside 5'-triphosphate = RNA(n+1) + diphosphate. In terms of biological role, DNA-dependent RNA polymerase (RNAP) catalyzes the transcription of DNA into RNA using the four ribonucleoside triphosphates as substrates. This Methanocella arvoryzae (strain DSM 22066 / NBRC 105507 / MRE50) protein is DNA-directed RNA polymerase subunit Rpo12.